Consider the following 581-residue polypeptide: uncharacterized protein (581 aa).

Ser-28 bears the Phosphoserine mark. 11 helical membrane-spanning segments follow: residues 61–81 (LVLI…AGSA), 100–120 (AGVL…ATFL), 125–145 (CVYL…ALVK), 187–207 (IYIL…GYIA), 214–234 (WIGW…LFTF), 340–360 (IFLF…DAWL), 382–402 (AVAI…IYGG), 426–446 (LWLM…FGIG), 458–478 (VGLG…MAYL), 486–506 (VLEA…VFTF), and 522–542 (ISIG…ILCG).

It belongs to the major facilitator superfamily.

The protein resides in the cytoplasm. Its subcellular location is the cell cortex. It is found in the membrane. This is an uncharacterized protein from Schizosaccharomyces pombe (strain 972 / ATCC 24843) (Fission yeast).